The chain runs to 222 residues: Interleukin-12 subunit alpha (222 aa).

The first 25 residues, 1-25 (MCPPRGLLLVAILVLLNHLDHLSLA), serve as a signal peptide directing secretion. 3 cysteine pairs are disulfide-bonded: Cys40–Cys113, Cys67–Cys199, and Cys88–Cys126. N-linked (GlcNAc...) asparagine glycosylation is found at Asn42, Asn96, and Asn110.

This sequence belongs to the IL-6 superfamily. Heterodimer with IL12B; disulfide-linked. This heterodimer is known as interleukin IL-12. Heterodimer with EBI3/IL27B; not disulfide-linked. This heterodimer is known as interleukin IL-35. Interacts with NBR1; this interaction promotes IL-12 secretion.

Its subcellular location is the secreted. Heterodimerizes with IL12B to form the IL-12 cytokine or with EBI3/IL27B to form the IL-35 cytokine. IL-12 is primarily produced by professional antigen-presenting cells (APCs) such as B-cells and dendritic cells (DCs) as well as macrophages and granulocytes and regulates T-cell and natural killer-cell responses, induces the production of interferon-gamma (IFN-gamma), favors the differentiation of T-helper 1 (Th1) cells and is an important link between innate resistance and adaptive immunity. Mechanistically, exerts its biological effects through a receptor composed of IL12R1 and IL12R2 subunits. Binding to the receptor results in the rapid tyrosine phosphorylation of a number of cellular substrates including the JAK family kinases TYK2 and JAK2. In turn, recruited STAT4 gets phosphorylated and translocates to the nucleus where it regulates cytokine/growth factor responsive genes. As part of IL-35, plays essential roles in maintaining the immune homeostasis of the liver microenvironment and also functions as an immune-suppressive cytokine. Mediates biological events through unconventional receptors composed of IL12RB2 and gp130/IL6ST heterodimers or homodimers. Signaling requires the transcription factors STAT1 and STAT4, which form a unique heterodimer that binds to distinct DNA sites. The sequence is that of Interleukin-12 subunit alpha (IL12A) from Equus caballus (Horse).